A 231-amino-acid polypeptide reads, in one-letter code: Lipoprotein-releasing system ATP-binding protein LolD (231 aa).

Residues 6-230 (LSCKNVSKKY…DGELELVINS (225 aa)) form the ABC transporter domain. 42-49 (GLSGSGKT) serves as a coordination point for ATP.

This sequence belongs to the ABC transporter superfamily. Lipoprotein translocase (TC 3.A.1.125) family. The complex is composed of two ATP-binding proteins (LolD) and two transmembrane proteins (LolC and LolE).

It localises to the cell inner membrane. In terms of biological role, part of the ABC transporter complex LolCDE involved in the translocation of mature outer membrane-directed lipoproteins, from the inner membrane to the periplasmic chaperone, LolA. Responsible for the formation of the LolA-lipoprotein complex in an ATP-dependent manner. This is Lipoprotein-releasing system ATP-binding protein LolD from Francisella tularensis subsp. holarctica (strain OSU18).